Here is a 261-residue protein sequence, read N- to C-terminus: Small ribosomal subunit protein eS1 (261 aa).

A compositionally biased stretch (basic residues) spans 1 to 18 (MAVGKNKRISKGKKGGKK). Residues 1–20 (MAVGKNKRISKGKKGGKKKA) form a disordered region.

The protein belongs to the eukaryotic ribosomal protein eS1 family. As to quaternary structure, component of the small ribosomal subunit. Mature ribosomes consist of a small (40S) and a large (60S) subunit. The 40S subunit contains about 33 different proteins and 1 molecule of RNA (18S). The 60S subunit contains about 49 different proteins and 3 molecules of RNA (25S, 5.8S and 5S).

The protein localises to the cytoplasm. In Catharanthus roseus (Madagascar periwinkle), this protein is Small ribosomal subunit protein eS1.